Consider the following 293-residue polypeptide: Pyridoxal 5'-phosphate synthase subunit PdxS (293 aa).

Aspartate 23 is a D-ribose 5-phosphate binding site. Lysine 80 serves as the catalytic Schiff-base intermediate with D-ribose 5-phosphate. Glycine 152 serves as a coordination point for D-ribose 5-phosphate. Arginine 164 contacts D-glyceraldehyde 3-phosphate. Residues glycine 213 and 234–235 (GS) contribute to the D-ribose 5-phosphate site.

It belongs to the PdxS/SNZ family. In the presence of PdxT, forms a dodecamer of heterodimers.

The enzyme catalyses aldehydo-D-ribose 5-phosphate + D-glyceraldehyde 3-phosphate + L-glutamine = pyridoxal 5'-phosphate + L-glutamate + phosphate + 3 H2O + H(+). Its pathway is cofactor biosynthesis; pyridoxal 5'-phosphate biosynthesis. Its function is as follows. Catalyzes the formation of pyridoxal 5'-phosphate from ribose 5-phosphate (RBP), glyceraldehyde 3-phosphate (G3P) and ammonia. The ammonia is provided by the PdxT subunit. Can also use ribulose 5-phosphate and dihydroxyacetone phosphate as substrates, resulting from enzyme-catalyzed isomerization of RBP and G3P, respectively. The protein is Pyridoxal 5'-phosphate synthase subunit PdxS of Herpetosiphon aurantiacus (strain ATCC 23779 / DSM 785 / 114-95).